Reading from the N-terminus, the 157-residue chain is Small ribosomal subunit protein uS7 (157 aa).

It belongs to the universal ribosomal protein uS7 family. In terms of assembly, part of the 30S ribosomal subunit. Contacts proteins S9 and S11.

Its function is as follows. One of the primary rRNA binding proteins, it binds directly to 16S rRNA where it nucleates assembly of the head domain of the 30S subunit. Is located at the subunit interface close to the decoding center, probably blocks exit of the E-site tRNA. In Protochlamydia amoebophila (strain UWE25), this protein is Small ribosomal subunit protein uS7.